A 78-amino-acid chain; its full sequence is UPF0335 protein RPR_04100 (78 aa).

Belongs to the UPF0335 family.

This is UPF0335 protein RPR_04100 from Rickettsia peacockii (strain Rustic).